The sequence spans 452 residues: Tubulin alpha-2/alpha-4 chain (452 aa).

Residue glutamine 11 participates in GTP binding. Lysine 40 is modified (N6-acetyllysine). Residues glutamate 71, serine 140, glycine 144, threonine 145, threonine 179, asparagine 206, and asparagine 228 each coordinate GTP. Residue glutamate 71 coordinates Mg(2+). Residue glutamate 254 is part of the active site. The segment at tyrosine 432–tyrosine 452 is disordered.

Belongs to the tubulin family. As to quaternary structure, dimer of alpha and beta chains. A typical microtubule is a hollow water-filled tube with an outer diameter of 25 nm and an inner diameter of 15 nM. Alpha-beta heterodimers associate head-to-tail to form protofilaments running lengthwise along the microtubule wall with the beta-tubulin subunit facing the microtubule plus end conferring a structural polarity. Microtubules usually have 13 protofilaments but different protofilament numbers can be found in some organisms and specialized cells. Requires Mg(2+) as cofactor. Undergoes a tyrosination/detyrosination cycle, the cyclic removal and re-addition of a C-terminal tyrosine residue by the enzymes tubulin tyrosine carboxypeptidase (TTCP) and tubulin tyrosine ligase (TTL), respectively. In terms of processing, acetylation of alpha chains at Lys-40 stabilizes microtubules and affects affinity and processivity of microtubule motors. This modification has a role in multiple cellular functions, ranging from cell motility, cell cycle progression or cell differentiation to intracellular trafficking and signaling.

The protein resides in the cytoplasm. It localises to the cytoskeleton. The enzyme catalyses GTP + H2O = GDP + phosphate + H(+). Tubulin is the major constituent of microtubules, a cylinder consisting of laterally associated linear protofilaments composed of alpha- and beta-tubulin heterodimers. Microtubules grow by the addition of GTP-tubulin dimers to the microtubule end, where a stabilizing cap forms. Below the cap, tubulin dimers are in GDP-bound state, owing to GTPase activity of alpha-tubulin. In Patella vulgata (Common limpet), this protein is Tubulin alpha-2/alpha-4 chain (TUB2).